The sequence spans 316 residues: Adenine deaminase (316 aa).

Positions 14, 16, and 194 each coordinate Zn(2+). Glu-197 functions as the Proton donor in the catalytic mechanism. Asp-275 is a binding site for Zn(2+). Asp-276 serves as a coordination point for substrate.

The protein belongs to the metallo-dependent hydrolases superfamily. Adenosine and AMP deaminases family. Adenine deaminase type 2 subfamily. Zn(2+) is required as a cofactor.

The enzyme catalyses adenine + H2O + H(+) = hypoxanthine + NH4(+). Its function is as follows. Catalyzes the hydrolytic deamination of adenine to hypoxanthine. Plays an important role in the purine salvage pathway and in nitrogen catabolism. This is Adenine deaminase from Pseudomonas aeruginosa (strain LESB58).